A 245-amino-acid chain; its full sequence is Probable proteasome subunit alpha type-2 (245 aa).

Belongs to the peptidase T1A family. As to quaternary structure, the 26S proteasome consists of a 20S proteasome core and two 19S regulatory subunits. The 20S proteasome core is composed of 28 subunits that are arranged in four stacked rings, resulting in a barrel-shaped structure. The two end rings are each formed by seven alpha subunits, and the two central rings are each formed by seven beta subunits. The catalytic chamber with the active sites is on the inside of the barrel.

Its subcellular location is the cytoplasm. The protein resides in the nucleus. In terms of biological role, the proteasome is a multicatalytic proteinase complex which is characterized by its ability to cleave peptides with Arg, Phe, Tyr, Leu, and Glu adjacent to the leaving group at neutral or slightly basic pH. The proteasome has an ATP-dependent proteolytic activity. The sequence is that of Probable proteasome subunit alpha type-2 (pre8) from Schizosaccharomyces pombe (strain 972 / ATCC 24843) (Fission yeast).